The primary structure comprises 318 residues: Elongation factor Ts, mitochondrial (318 aa).

The transit peptide at 1-18 directs the protein to the mitochondrion; that stretch reads MLLQRFFTRALHSTRQLY.

The protein belongs to the EF-Ts family.

It is found in the mitochondrion. Associates with the EF-Tu.GDP complex and induces the exchange of GDP to GTP. It remains bound to the aminoacyl-tRNA.EF-Tu.GTP complex up to the GTP hydrolysis stage on the ribosome. This Drosophila melanogaster (Fruit fly) protein is Elongation factor Ts, mitochondrial.